Consider the following 501-residue polypeptide: Protein DETOXIFICATION 37 (501 aa).

The next 12 helical transmembrane spans lie at 44-64, 84-104, 134-154, 163-183, 200-220, 222-242, 280-300, 310-330, 352-372, 396-416, 422-442, and 453-473; these read MMIE…VYVI, LAAA…LLLG, VVLI…NPIL, VATL…AYAV, SAYI…IAVY, LGYG…IIVV, AVML…AGLL, LAIC…FNAA, VVTT…VLSW, FLAI…VAVG, FVAY…GFVL, and IWTG…IVTL.

This sequence belongs to the multi antimicrobial extrusion (MATE) (TC 2.A.66.1) family.

It is found in the membrane. In Arabidopsis thaliana (Mouse-ear cress), this protein is Protein DETOXIFICATION 37.